The sequence spans 142 residues: Large ribosomal subunit protein uL11 (142 aa).

The protein belongs to the universal ribosomal protein uL11 family. Part of the ribosomal stalk of the 50S ribosomal subunit. Interacts with L10 and the large rRNA to form the base of the stalk. L10 forms an elongated spine to which L12 dimers bind in a sequential fashion forming a multimeric L10(L12)X complex. Post-translationally, one or more lysine residues are methylated.

Functionally, forms part of the ribosomal stalk which helps the ribosome interact with GTP-bound translation factors. This Shigella boydii serotype 4 (strain Sb227) protein is Large ribosomal subunit protein uL11.